The sequence spans 838 residues: Transient receptor potential cation channel subfamily V member 1 (838 aa).

2 disordered regions span residues 1 to 63 and 86 to 109; these read MEQR…PLDC and RPGD…EKPP. Residues 1–432 lie on the Cytoplasmic side of the membrane; sequence MEQRASLDSE…QDKWDRFVKR (432 aa). An ANK 1 repeat occupies 110–138; sequence RLYDRRSIFDAVAQSNCQELESLLPFLQR. R115 is an ATP binding site. S116 carries the post-translational modification Phosphoserine; by PKA and PKD. T144 is subject to Phosphothreonine; by PKA; in vitro. Residues 153 to 185 form an ANK 2 repeat; that stretch reads TGKTCLLKAMLNLHNGQNDTIALLLDVARKTDS. ATP-binding positions include K155, K160, N164, 199–202, and 210–211; these read YKGQ and ER. ANK repeat units follow at residues 203 to 228, 249 to 276, 285 to 321, and 335 to 358; these read TALH…ADVQ, ELPL…QPAD, NTVL…KLHP, and TPLA…REIH. Phosphothreonine; by PKA; in vitro is present on T370. The stretch at 393–415 is one ANK 7 repeat; the sequence is NSVLEVIAYSSSETPNRHDMLLV. A helical membrane pass occupies residues 433-453; the sequence is IFYFNFFVYCLYMIIFTAAAY. Residues 454 to 471 are Extracellular-facing; the sequence is YRPVEGLPPYKLKNTVGD. A helical membrane pass occupies residues 472–497; sequence YFRVTGEILSVSGGVYFFFRGIQYFL. Over 498–510 the chain is Cytoplasmic; sequence QRRPSLKSLFVDS. At S502 the chain carries Phosphoserine; by PKC/PRKCE. 511–512 contributes to the resiniferatoxin binding site; the sequence is YS. Residues 511-531 traverse the membrane as a helical segment; sequence YSEILFFVQSLFMLVSVVLYF. At 532–535 the chain is on the extracellular side; it reads SQRK. Residues 536–556 form a helical membrane-spanning segment; that stretch reads EYVASMVFSLAMGWTNMLYYT. The resiniferatoxin site is built by T550 and R557. Residues 557–571 lie on the Cytoplasmic side of the membrane; that stretch reads RGFQQMGIYAVMIEK. The chain crosses the membrane as a helical span at residues 572–599; it reads MILRDLCRFMFVYLVFLFGFSTAVVTLI. Residues 600 to 626 lie on the Extracellular side of the membrane; sequence EDGKNNSLPMESTPHKCRGSACKPGNS. N604 carries an N-linked (GlcNAc...) asparagine glycan. An intramembrane region (pore-forming) is located at residues 627–649; the sequence is YNSLYSTCLELFKFTIGMGDLEF. Na(+) is bound at residue G643. The Selectivity filter signature appears at 643–646; that stretch reads GMGD. D646 provides a ligand contact to Ca(2+). Residues 650–657 are Extracellular-facing; the sequence is TENYDFKA. Residues 658–686 form a helical membrane-spanning segment; the sequence is VFIILLLAYVILTYILLLNMLIALMGETV. Positions 684–712 are AD; that stretch reads ETVNKIAQESKNIWKLQRAITILDTEKSF. Topologically, residues 687–838 are cytoplasmic; sequence NKIAQESKNI…FKDSMVPGEK (152 aa). T704 carries the phosphothreonine modification. Residues 767 to 801 form an interaction with calmodulin region; the sequence is EGVKRTLSFSLRSGRVSGRNWKNFALVPLLRDAST. Position 774 is a phosphoserine; by PKA; in vitro (S774). The segment at 777–792 is required for PIP2-mediated channel inhibition; the sequence is LRSGRVSGRNWKNFAL. At S800 the chain carries Phosphoserine; by PKC/PRKCE and PKC/PRKCZ. S820 bears the Phosphoserine; by PKA; in vitro mark.

The protein belongs to the transient receptor (TC 1.A.4) family. TrpV subfamily. TRPV1 sub-subfamily. In terms of assembly, homotetramer. Interacts with PIRT. May also form a heteromeric channel with TRPV3. Interacts with CALM, PRKCM and CSK. Interacts with PRKCG and NTRK1, probably by forming a trimeric complex. Interacts with the Scolopendra mutilans RhTx toxin. Interacts with the spider Tau-theraphotoxin-Hs1a. Interacts with TMEM100. Interacts with PACS2. Post-translationally, phosphorylation by PKA reverses capsaicin-induced dephosphorylation at multiple sites, probably including Ser-116 as a major phosphorylation site. Phosphorylation by CAMKII seems to regulate binding to vanilloids. Phosphorylated and modulated by PRKCE, PRKCM and probably PRKCZ. Dephosphorylation by calcineurin seems to lead to receptor desensitization and phosphorylation by CAMKII recovers activity. Predominantly expressed in trigeminal and dorsal root sensory ganglia. Expressed also in hippocampus, cortex, cerebellum, olfactory bulb, mesencephalon and hindbrain. High expression in the cell bodies and dendrites of neurons in the hippocampus and in the cortex. In the brain detected also in astrocytes and pericytes (at protein level). Isoform 1 and isoform 3 are expressed in brain and peripheral blood mononuclear cells.

Its subcellular location is the postsynaptic cell membrane. The protein localises to the cell projection. The protein resides in the dendritic spine membrane. It is found in the cell membrane. It carries out the reaction Ca(2+)(in) = Ca(2+)(out). The catalysed reaction is Mg(2+)(in) = Mg(2+)(out). It catalyses the reaction Na(+)(in) = Na(+)(out). The enzyme catalyses K(+)(in) = K(+)(out). Its activity is regulated as follows. Channel activity is activated via the interaction with PIRT and phosphatidylinositol 4,5-bisphosphate (PIP2). Both PIRT and PIP2 are required to activate channel activity. The channel is sensitized by ATP binding. Repeated stimulation with capsaicin gives rise to progressively smaller responses, due to desensitization. This desensitization is triggered by the influx of calcium ions and is inhibited by elevated ATP levels. Ca(2+) and CALM displace ATP from its binding site and trigger a conformation change that leads to a closed, desensitized channel. Intracellular PIP2 inhibits desensitization. The double-knot toxin (DkTx) from the Chinese earth tiger tarantula activates the channel and traps it in an open conformation. The Scolopendra mutilans RhTx toxin potentiates the heat activation pathway mediated by this channel by binding to the charge-rich outer pore region (in an activated state). Functionally, non-selective calcium permeant cation channel involved in detection of noxious chemical and thermal stimuli. Seems to mediate proton influx and may be involved in intracellular acidosis in nociceptive neurons. Involved in mediation of inflammatory pain and hyperalgesia. Sensitized by a phosphatidylinositol second messenger system activated by receptor tyrosine kinases, which involves PKC isozymes and PCL. Activation by vanilloids, like capsaicin, and temperatures higher than 42 degrees Celsius. Upon activation, exhibits a time- and Ca(2+)-dependent outward rectification, followed by a long-lasting refractory state. Mild extracellular acidic pH (6.5) potentiates channel activation by noxious heat and vanilloids, whereas acidic conditions (pH &lt;6) directly activate the channel. Can be activated by endogenous compounds, including 12-hydroperoxytetraenoic acid and bradykinin. Acts as ionotropic endocannabinoid receptor with central neuromodulatory effects. Triggers a form of long-term depression (TRPV1-LTD) mediated by the endocannabinoid anandamine in the hippocampus and nucleus accumbens by affecting AMPA receptors endocytosis. Does not display channel activity in response to noxious chemical compounds, such as capsaicin and the vanilloid resiniferatoxin. Channel activity is not elicited by mildly acidic extracellular pH, and only slight channel activity is observed in response to noxiuos heat stimuli. This Rattus norvegicus (Rat) protein is Transient receptor potential cation channel subfamily V member 1 (Trpv1).